The following is a 430-amino-acid chain: Histidine--tRNA ligase (430 aa).

Belongs to the class-II aminoacyl-tRNA synthetase family. As to quaternary structure, homodimer.

Its subcellular location is the cytoplasm. It catalyses the reaction tRNA(His) + L-histidine + ATP = L-histidyl-tRNA(His) + AMP + diphosphate + H(+). This Chlamydia caviae (strain ATCC VR-813 / DSM 19441 / 03DC25 / GPIC) (Chlamydophila caviae) protein is Histidine--tRNA ligase.